The primary structure comprises 240 residues: Orotidine 5'-phosphate decarboxylase (240 aa).

Substrate is bound by residues Asp-15, Lys-37, 64 to 73 (DLKYHDIPNT), Thr-127, Arg-188, Gln-197, Gly-217, and Arg-218. The active-site Proton donor is the Lys-66.

The protein belongs to the OMP decarboxylase family. Type 1 subfamily. In terms of assembly, homodimer.

It carries out the reaction orotidine 5'-phosphate + H(+) = UMP + CO2. It functions in the pathway pyrimidine metabolism; UMP biosynthesis via de novo pathway; UMP from orotate: step 2/2. In terms of biological role, catalyzes the decarboxylation of orotidine 5'-monophosphate (OMP) to uridine 5'-monophosphate (UMP). The sequence is that of Orotidine 5'-phosphate decarboxylase from Geobacter sp. (strain M21).